Consider the following 185-residue polypeptide: Adenine phosphoribosyltransferase (185 aa).

Belongs to the purine/pyrimidine phosphoribosyltransferase family. Homodimer.

Its subcellular location is the cytoplasm. It catalyses the reaction AMP + diphosphate = 5-phospho-alpha-D-ribose 1-diphosphate + adenine. The protein operates within purine metabolism; AMP biosynthesis via salvage pathway; AMP from adenine: step 1/1. In terms of biological role, catalyzes a salvage reaction resulting in the formation of AMP, that is energically less costly than de novo synthesis. The chain is Adenine phosphoribosyltransferase from Nocardioides sp. (strain ATCC BAA-499 / JS614).